Here is a 690-residue protein sequence, read N- to C-terminus: Dual specificity protein kinase lkh1 (690 aa).

A disordered region spans residues 39-70 (PNLPPPFSVHQLQSFVPPQPPSSSSPSTTGTV). Residues 362 to 682 (YTVVRLLGHG…AKEALWHPFF (321 aa)) form the Protein kinase domain. ATP is bound by residues 368–376 (LGHGTFGKV) and lysine 391. The active-site Proton acceptor is aspartate 488.

The protein belongs to the protein kinase superfamily. CMGC Ser/Thr protein kinase family. Lammer subfamily. In terms of processing, autophosphorylates on all three types of residues.

The catalysed reaction is L-seryl-[protein] + ATP = O-phospho-L-seryl-[protein] + ADP + H(+). The enzyme catalyses L-threonyl-[protein] + ATP = O-phospho-L-threonyl-[protein] + ADP + H(+). It catalyses the reaction L-tyrosyl-[protein] + ATP = O-phospho-L-tyrosyl-[protein] + ADP + H(+). Protein kinase that may act as a negative regulator of filamentous growth and flocculation. Appears to have a role in normal cell wall and septum formation and in cell separation. May have antagonistic function in the regulation of beta-glucan distribution between the sites for cell wall and septum assembly. The polypeptide is Dual specificity protein kinase lkh1 (lkh1) (Schizosaccharomyces pombe (strain 972 / ATCC 24843) (Fission yeast)).